The primary structure comprises 256 residues: RNA polymerase sigma factor SigI1 (256 aa).

The Polymerase core binding signature appears at 67–80; that stretch reads DEFSIALSAFNEAI. The H-T-H motif DNA-binding region spans 205-224; the sequence is RNELKKKAKVHGRTIGNNRK.

This sequence belongs to the sigma-70 factor family. SigI subfamily. Interacts with RsgI1.

It is found in the cytoplasm. Its activity is regulated as follows. Negatively regulated by the anti-sigma-I factor RsgI1. Binding of the polysaccharide substrate to RsgI1 may lead to the release and activation of SigI1. In terms of biological role, sigma factors are initiation factors that promote the attachment of RNA polymerase to specific initiation sites and are then released. This sigma factor is involved in regulation of cellulosomal genes via an external polysaccharide-sensing mechanism. SigI1 promotes transcription from sigI1 and celS promoters. The chain is RNA polymerase sigma factor SigI1 from Acetivibrio thermocellus (strain ATCC 27405 / DSM 1237 / JCM 9322 / NBRC 103400 / NCIMB 10682 / NRRL B-4536 / VPI 7372) (Clostridium thermocellum).